The primary structure comprises 675 residues: MSDETTGSLGDAFSPMDTPTTTIMPPPADVDESGFSHSLLTFAAVMTFLIMIVGICGNLLTVVALLKCPKVRNVAAAFIISLCIADLLFCALVLPFQGLRFVQGTWRHGEVLCRLIPFIQYGNIGVSLLCIAMITINRYVMITHYSLYNRIYKRHWIAIMIAACWLFSYGMQLPTLLGAWGRFGYDARLQTCSIMSDRHGHSSKTTLFITAFVIPCLVIIACYAKIFWVVHKSEQRLKRHATKQNSIPNNLRPLAAATSMPSGDGANPSQVPAGCRVSSDSSSNYSTDVPDTTPGGAGGGAGVKQQPSRVKDQREVRAKRNEWRITKMVLAIFLSFVICYLPITIVKVADKDVEHPSLHIFSYIMLYLSACINPIIYVIMNKQYRKAYKTVVFCQPAARLLMPFGKGNGASSAAEKWKDTGLSNNHSRTIVSQMSAGATATATATAAAGTQPQSTSTQGPVQALELTARVPDLISKSSNLPLPQPLPQIPPAGARPSLTPPPPPSVLTATHSNGSGSQRLPLKKNNHSYTNSGFNSSVISANPSSSPSPSSSGGGIYRPGIGSMGNGSASIRRITMVGDDIILEEEELPPTPTASSPPQMQAPPPPPSSSRQTTMNALNTTPKTPIYMNVDSPKRNQSYSERNIPVPAREGHDQGVKDSQGLPSKLMDKKKFPKD.

Topologically, residues 1–44 (MSDETTGSLGDAFSPMDTPTTTIMPPPADVDESGFSHSLLTFAA) are extracellular. Residues 45–65 (VMTFLIMIVGICGNLLTVVAL) traverse the membrane as a helical segment. Over 66-73 (LKCPKVRN) the chain is Cytoplasmic. Residues 74 to 94 (VAAAFIISLCIADLLFCALVL) form a helical membrane-spanning segment. The Extracellular segment spans residues 95–115 (PFQGLRFVQGTWRHGEVLCRL). Cys113 and Cys192 are joined by a disulfide. A helical transmembrane segment spans residues 116–136 (IPFIQYGNIGVSLLCIAMITI). Residues 137–156 (NRYVMITHYSLYNRIYKRHW) are Cytoplasmic-facing. A helical membrane pass occupies residues 157–177 (IAIMIAACWLFSYGMQLPTLL). The Extracellular portion of the chain corresponds to 178 to 206 (GAWGRFGYDARLQTCSIMSDRHGHSSKTT). Residues 207–227 (LFITAFVIPCLVIIACYAKIF) traverse the membrane as a helical segment. Residues 228–327 (WVVHKSEQRL…AKRNEWRITK (100 aa)) lie on the Cytoplasmic side of the membrane. A disordered region spans residues 258 to 316 (TSMPSGDGANPSQVPAGCRVSSDSSSNYSTDVPDTTPGGAGGGAGVKQQPSRVKDQREV). A compositionally biased stretch (low complexity) spans 278–294 (SSDSSSNYSTDVPDTTP). The helical transmembrane segment at 328 to 348 (MVLAIFLSFVICYLPITIVKV) threads the bilayer. Residues 349–359 (ADKDVEHPSLH) are Extracellular-facing. Residues 360–380 (IFSYIMLYLSACINPIIYVIM) form a helical membrane-spanning segment. Topologically, residues 381-675 (NKQYRKAYKT…LMDKKKFPKD (295 aa)) are cytoplasmic. Disordered stretches follow at residues 475-568 (SKSS…GNGS) and 588-675 (LPPT…FPKD). Over residues 536 to 551 (SSVISANPSSSPSPSS) the composition is skewed to low complexity. Residues 552–565 (SGGGIYRPGIGSMG) are compositionally biased toward gly residues. The span at 666 to 675 (LMDKKKFPKD) shows a compositional bias: basic and acidic residues.

Belongs to the G-protein coupled receptor 1 family.

The protein localises to the cell membrane. In terms of biological role, required in glia to regulate the acute sensitivity to cocaine and to continuously maintain the proper blood-brain barrier (BBB) function. A moody-mediated signaling pathway functions in glia to regulate nervous system insulation and drug-related behaviors. This chain is G-protein coupled receptor moody, found in Drosophila pseudoobscura pseudoobscura (Fruit fly).